The sequence spans 500 residues: Glycerol kinase (500 aa).

T15 is a binding site for ADP. Positions 15, 16, and 17 each coordinate ATP. T15 lines the sn-glycerol 3-phosphate pocket. Residue R19 participates in ADP binding. Residues R85, E86, Y137, and D245 each contribute to the sn-glycerol 3-phosphate site. 5 residues coordinate glycerol: R85, E86, Y137, D245, and Q246. The ADP site is built by T267 and G310. ATP-binding residues include T267, G310, Q314, and G411. 2 residues coordinate ADP: G411 and N415.

Belongs to the FGGY kinase family.

The enzyme catalyses glycerol + ATP = sn-glycerol 3-phosphate + ADP + H(+). It functions in the pathway polyol metabolism; glycerol degradation via glycerol kinase pathway; sn-glycerol 3-phosphate from glycerol: step 1/1. Its activity is regulated as follows. Inhibited by fructose 1,6-bisphosphate (FBP). In terms of biological role, key enzyme in the regulation of glycerol uptake and metabolism. Catalyzes the phosphorylation of glycerol to yield sn-glycerol 3-phosphate. The polypeptide is Glycerol kinase (Aeromonas salmonicida (strain A449)).